The primary structure comprises 205 residues: Ephrin-A1 (205 aa).

A signal peptide spans 1–17 (MEFLWAPLLGLCCSLAA). Residues 18 to 161 (ADRHIVFWNS…THNPQAHVNP (144 aa)) form the Ephrin RBD domain. A glycan (N-linked (GlcNAc...) asparagine) is linked at asparagine 26. 2 disulfide bridges follow: cysteine 51–cysteine 92 and cysteine 80–cysteine 140. Residue serine 182 is the site of GPI-anchor amidated serine attachment. A propeptide spans 183 to 205 (AAPRLFPLVWAVLLLPLLLLQSQ) (removed in mature form).

It belongs to the ephrin family. Monomer. Homodimer. Forms heterodimers with EPHA2. Binds to the receptor tyrosine kinases EPHA2, EPHA3, EPHA4, EPHA5, EPHA6 and EPHA7. Also binds with low affinity to EPHA1. Undergoes proteolysis by a metalloprotease to give rise to a soluble monomeric form. Post-translationally, N-Glycosylation is required for binding to EPHA2 receptor and inducing its internalization. As to expression, expressed in myogenic progenitor cells.

It localises to the cell membrane. The protein localises to the secreted. Functionally, cell surface GPI-bound ligand for Eph receptors, a family of receptor tyrosine kinases which are crucial for migration, repulsion and adhesion during neuronal, vascular and epithelial development. Binds promiscuously Eph receptors residing on adjacent cells, leading to contact-dependent bidirectional signaling into neighboring cells. Plays an important role in angiogenesis and tumor neovascularization. The recruitment of VAV2, VAV3 and PI3-kinase p85 subunit by phosphorylated EPHA2 is critical for EFNA1-induced RAC1 GTPase activation and vascular endothelial cell migration and assembly. Exerts anti-oncogenic effects in tumor cells through activation and down-regulation of EPHA2. Activates EPHA2 by inducing tyrosine phosphorylation which leads to its internalization and degradation. Acts as a negative regulator in the tumorigenesis of gliomas by down-regulating EPHA2 and FAK. Can evoke collapse of embryonic neuronal growth cone and regulates dendritic spine morphogenesis. The protein is Ephrin-A1 (Efna1) of Mus musculus (Mouse).